The chain runs to 203 residues: Ribonuclease HII (203 aa).

The RNase H type-2 domain occupies 14-203; the sequence is GVIAGVDEVG…ILNSTKRALL (190 aa). A divalent metal cation is bound by residues aspartate 20, glutamate 21, and aspartate 112.

Belongs to the RNase HII family. Mn(2+) serves as cofactor. Requires Mg(2+) as cofactor.

The protein resides in the cytoplasm. The catalysed reaction is Endonucleolytic cleavage to 5'-phosphomonoester.. In terms of biological role, endonuclease that specifically degrades the RNA of RNA-DNA hybrids. The chain is Ribonuclease HII from Wolbachia sp. subsp. Brugia malayi (strain TRS).